Consider the following 266-residue polypeptide: NAD kinase 1 (266 aa).

The active-site Proton acceptor is aspartate 45. Residues 45–46, 122–123, and arginine 148 contribute to the NAD(+) site; these read DG and NE. Aspartate 150 is an ATP binding site. Residues serine 158 and 161-166 contribute to the NAD(+) site; that span reads TAYNKA.

This sequence belongs to the NAD kinase family. As to quaternary structure, homodimer. Ca(2+) is required as a cofactor. Mn(2+) serves as cofactor.

The protein resides in the cytoplasm. The catalysed reaction is NAD(+) + ATP = ADP + NADP(+) + H(+). Its activity is regulated as follows. Allosterically inhibited by NADP and activated by quinolinic acid. Strongly inhibited by HgCl(2). Involved in the regulation of the intracellular balance of NAD and NADP, and is a key enzyme in the biosynthesis of NADP. Catalyzes specifically the phosphorylation on 2'-hydroxyl of the adenosine moiety of NAD to yield NADP. It can use ATP and other nucleoside triphosphates (GTP, UTP) as well as inorganic polyphosphate (poly(P)) as a source of phosphorus. In Bacillus subtilis (strain 168), this protein is NAD kinase 1 (ppnKA).